The following is a 292-amino-acid chain: Ribosomal protein L11 methyltransferase (292 aa).

Thr-144, Gly-165, Asp-187, and Asn-229 together coordinate S-adenosyl-L-methionine.

Belongs to the methyltransferase superfamily. PrmA family.

The protein localises to the cytoplasm. It carries out the reaction L-lysyl-[protein] + 3 S-adenosyl-L-methionine = N(6),N(6),N(6)-trimethyl-L-lysyl-[protein] + 3 S-adenosyl-L-homocysteine + 3 H(+). Functionally, methylates ribosomal protein L11. In Pseudomonas putida (strain GB-1), this protein is Ribosomal protein L11 methyltransferase.